Consider the following 573-residue polypeptide: Urease subunit alpha (573 aa).

Residues G136–F573 enclose the Urease domain. The Ni(2+) site is built by H141, H143, and K224. Residue K224 is modified to N6-carboxylysine. H226 provides a ligand contact to substrate. Positions 253 and 279 each coordinate Ni(2+). H327 serves as the catalytic Proton donor. A Ni(2+)-binding site is contributed by D367.

Belongs to the metallo-dependent hydrolases superfamily. Urease alpha subunit family. In terms of assembly, heterotrimer of UreA (gamma), UreB (beta) and UreC (alpha) subunits. Three heterotrimers associate to form the active enzyme. Ni cation serves as cofactor. Carboxylation allows a single lysine to coordinate two nickel ions.

The protein localises to the cytoplasm. It catalyses the reaction urea + 2 H2O + H(+) = hydrogencarbonate + 2 NH4(+). Its pathway is nitrogen metabolism; urea degradation; CO(2) and NH(3) from urea (urease route): step 1/1. This Nocardia farcinica (strain IFM 10152) protein is Urease subunit alpha.